Here is a 146-residue protein sequence, read N- to C-terminus: Large ribosomal subunit protein uL16 (146 aa).

This sequence belongs to the universal ribosomal protein uL16 family. As to quaternary structure, part of the 50S ribosomal subunit.

Binds 23S rRNA and is also seen to make contacts with the A and possibly P site tRNAs. The protein is Large ribosomal subunit protein uL16 of Lactobacillus acidophilus (strain ATCC 700396 / NCK56 / N2 / NCFM).